Here is a 417-residue protein sequence, read N- to C-terminus: Serine hydroxymethyltransferase (417 aa).

(6S)-5,6,7,8-tetrahydrofolate-binding positions include leucine 121 and 125 to 127; that span reads GHL. Lysine 230 is modified (N6-(pyridoxal phosphate)lysine). Position 355–357 (355–357) interacts with (6S)-5,6,7,8-tetrahydrofolate; that stretch reads SPF.

The protein belongs to the SHMT family. Homodimer. Requires pyridoxal 5'-phosphate as cofactor.

The protein resides in the cytoplasm. It carries out the reaction (6R)-5,10-methylene-5,6,7,8-tetrahydrofolate + glycine + H2O = (6S)-5,6,7,8-tetrahydrofolate + L-serine. Its pathway is one-carbon metabolism; tetrahydrofolate interconversion. It participates in amino-acid biosynthesis; glycine biosynthesis; glycine from L-serine: step 1/1. Its function is as follows. Catalyzes the reversible interconversion of serine and glycine with tetrahydrofolate (THF) serving as the one-carbon carrier. This reaction serves as the major source of one-carbon groups required for the biosynthesis of purines, thymidylate, methionine, and other important biomolecules. Also exhibits THF-independent aldolase activity toward beta-hydroxyamino acids, producing glycine and aldehydes, via a retro-aldol mechanism. The sequence is that of Serine hydroxymethyltransferase from Legionella pneumophila subsp. pneumophila (strain Philadelphia 1 / ATCC 33152 / DSM 7513).